Here is a 249-residue protein sequence, read N- to C-terminus: 2-C-methyl-D-erythritol 4-phosphate cytidylyltransferase (249 aa).

Belongs to the IspD/TarI cytidylyltransferase family. IspD subfamily.

The enzyme catalyses 2-C-methyl-D-erythritol 4-phosphate + CTP + H(+) = 4-CDP-2-C-methyl-D-erythritol + diphosphate. Its pathway is isoprenoid biosynthesis; isopentenyl diphosphate biosynthesis via DXP pathway; isopentenyl diphosphate from 1-deoxy-D-xylulose 5-phosphate: step 2/6. Functionally, catalyzes the formation of 4-diphosphocytidyl-2-C-methyl-D-erythritol from CTP and 2-C-methyl-D-erythritol 4-phosphate (MEP). This chain is 2-C-methyl-D-erythritol 4-phosphate cytidylyltransferase, found in Chromohalobacter salexigens (strain ATCC BAA-138 / DSM 3043 / CIP 106854 / NCIMB 13768 / 1H11).